The sequence spans 100 residues: MTPWFLYLIRTADNKLYTGITTDVERRYQQHQSGKGAKALRGKGELTLAFSAPVGDRSLALRAEYRVKQLTKRQKERLVAEGAVFAELLSSLQTPEIKSD.

Residues 2–77 form the GIY-YIG domain; the sequence is TPWFLYLIRT…KQLTKRQKER (76 aa).

Belongs to the UPF0213 family.

In Escherichia coli O1:K1 / APEC, this protein is UPF0213 protein YhbQ.